Here is a 434-residue protein sequence, read N- to C-terminus: Serine hydroxymethyltransferase (434 aa).

(6S)-5,6,7,8-tetrahydrofolate is bound by residues Leu-133 and 137-139 (GHL). An N6-(pyridoxal phosphate)lysine modification is found at Lys-242.

Belongs to the SHMT family. Homodimer. Requires pyridoxal 5'-phosphate as cofactor.

It localises to the cytoplasm. It carries out the reaction (6R)-5,10-methylene-5,6,7,8-tetrahydrofolate + glycine + H2O = (6S)-5,6,7,8-tetrahydrofolate + L-serine. It functions in the pathway one-carbon metabolism; tetrahydrofolate interconversion. Its pathway is amino-acid biosynthesis; glycine biosynthesis; glycine from L-serine: step 1/1. Its function is as follows. Catalyzes the reversible interconversion of serine and glycine with tetrahydrofolate (THF) serving as the one-carbon carrier. This reaction serves as the major source of one-carbon groups required for the biosynthesis of purines, thymidylate, methionine, and other important biomolecules. Also exhibits THF-independent aldolase activity toward beta-hydroxyamino acids, producing glycine and aldehydes, via a retro-aldol mechanism. In Bradyrhizobium sp. (strain BTAi1 / ATCC BAA-1182), this protein is Serine hydroxymethyltransferase.